A 258-amino-acid chain; its full sequence is Leucine-rich repeat-containing protein 3B (258 aa).

The N-terminal stretch at 1 to 33 (MTPLDLWLSRSIPMCLLLQSLVLMVLCFPSAST) is a signal peptide. Positions 34–68 (CPKGCTCQRSESPPHGLNVTCSLSRLKEIPPDVPP) constitute an LRRNT domain. N-linked (GlcNAc...) asparagine glycosylation occurs at asparagine 51. LRR repeat units follow at residues 69-90 (DTQL…IFHG), 93-114 (MLRR…AFIG), and 118-139 (SLEV…AFAR). N-linked (GlcNAc...) asparagine glycosylation occurs at asparagine 98. The LRRCT domain maps to 149 to 196 (NPWHCDCALQQALGGMAHNHERVLCRSSELRDQEGQPFMAVDADLCNL). The chain crosses the membrane as a helical span at residues 204–224 (AMLVTMFGWFAMVISYVVYYV).

Belongs to the LRRC3 family.

Its subcellular location is the membrane. This Danio rerio (Zebrafish) protein is Leucine-rich repeat-containing protein 3B (lrrc3b).